Reading from the N-terminus, the 127-residue chain is MISKIFEIVHKHQKFISGVCISKTHTKTAMCQVKRLYFDKGKYSALNYKTTKYMIHDPNDICAVGDQVHFRECAPVSKRKAHVVEKIVKKNPITEFLRQNPQYIVTPKEIAERKENDKIKYKHITDL.

It belongs to the universal ribosomal protein uS17 family.

It localises to the mitochondrion. The polypeptide is Small ribosomal subunit protein uS17m (mrps17) (Dictyostelium discoideum (Social amoeba)).